We begin with the raw amino-acid sequence, 88 residues long: MSFTDETVRFEFGDSDKKEIGETLVDVYNVLEAKGYNPINQIVGYVLSGDPAYIPRHDDARNKIRRFDRDDIVEELIKNYLKDNGVNL.

This sequence belongs to the UPF0297 family.

This is UPF0297 protein LACR_0137 from Lactococcus lactis subsp. cremoris (strain SK11).